A 393-amino-acid polypeptide reads, in one-letter code: NAD(P)H-quinone oxidoreductase subunit H, chloroplastic (393 aa).

This sequence belongs to the complex I 49 kDa subunit family. NDH is composed of at least 16 different subunits, 5 of which are encoded in the nucleus.

The protein resides in the plastid. It is found in the chloroplast thylakoid membrane. It catalyses the reaction a plastoquinone + NADH + (n+1) H(+)(in) = a plastoquinol + NAD(+) + n H(+)(out). It carries out the reaction a plastoquinone + NADPH + (n+1) H(+)(in) = a plastoquinol + NADP(+) + n H(+)(out). Functionally, NDH shuttles electrons from NAD(P)H:plastoquinone, via FMN and iron-sulfur (Fe-S) centers, to quinones in the photosynthetic chain and possibly in a chloroplast respiratory chain. The immediate electron acceptor for the enzyme in this species is believed to be plastoquinone. Couples the redox reaction to proton translocation, and thus conserves the redox energy in a proton gradient. This chain is NAD(P)H-quinone oxidoreductase subunit H, chloroplastic, found in Lactuca sativa (Garden lettuce).